We begin with the raw amino-acid sequence, 372 residues long: Cyclin-dependent kinase 9 (372 aa).

The Protein kinase domain maps to 19-315 (YEKLAKIGQG…SDDALNHDFF (297 aa)). 25 to 33 (IGQGTFGEV) serves as a coordination point for ATP. Lys-44 is modified (N6-acetyllysine; by EP300/CBP, PCAF/KAT2B and GCN5/KAT2A). ATP is bound by residues Lys-48 and 104-106 (DFC). Position 48 is an N6-acetyllysine; by PCAF/KAT2B and GCN5/KAT2A (Lys-48). Asp-149 (proton acceptor) is an active-site residue. Residues 166-191 (ADFGLARAFSLAKNSQPNRYTNRVVT) are T-loop. Asp-167 lines the ATP pocket. Ser-175 carries the post-translational modification Phosphoserine. Thr-186 carries the phosphothreonine; by CaMK1D modification. Positions 343–372 (RRKGSQITQQSTNQSRNPATTNQTEFERVF) are disordered. At Ser-347 the chain carries Phosphoserine; by CDK9 and PKA. The span at 347–366 (SQITQQSTNQSRNPATTNQT) shows a compositional bias: polar residues. Position 350 is a phosphothreonine; by CDK9 (Thr-350). Ser-353 is subject to Phosphoserine; by CDK9. Phosphothreonine; by CDK9 is present on Thr-354. At Ser-357 the chain carries Phosphoserine; by CDK9. Residues Thr-362 and Thr-363 each carry the phosphothreonine; by CDK9 modification.

The protein belongs to the protein kinase superfamily. CMGC Ser/Thr protein kinase family. CDC2/CDKX subfamily. As to quaternary structure, component of the super elongation complex (SEC), at least composed of EAF1, EAF2, CDK9, MLLT3/AF9, AFF (AFF1 or AFF4), the P-TEFb complex and ELL (ELL, ELL2 or ELL3). Associates with CCNT1/cyclin-T1, CCNT2/cyclin-T2 (isoform A and isoform B) or CCNK/cyclin-K to form active P-TEFb. P-TEFb forms a complex with AFF4/AF5Q31 and is part of the super elongation complex (SEC). Component of a complex which is composed of at least 5 members: HTATSF1/Tat-SF1, P-TEFb complex, RNA pol II, SUPT5H, and NCL/nucleolin. Associates with UBR5 and forms a transcription regulatory complex composed of CDK9, RNAP II, UBR5 and TFIIS/TCEA1 that can stimulate target gene transcription (e.g. gamma fibrinogen/FGG) by recruiting their promoters. Component of the 7SK snRNP inactive complex which is composed of at least 8 members: P-TEFb (composed of CDK9 and CCNT1/cyclin-T1), HEXIM1, HEXIM2, LARP7, BCDIN3, SART3 proteins and 7SK and U6 snRNAs. This inactive 7SK snRNP complex can also interact with NCOR1 and HDAC3, probably to regulate CDK9 acetylation. Release of P-TEFb from P-TEFb/7SK snRNP complex requires both PP2B to transduce calcium Ca(2+) signaling in response to stimuli (e.g. UV or hexamethylene bisacetamide (HMBA)), and PPP1CA to dephosphorylate Thr-186. This released P-TEFb remains inactive in the pre-initiation complex with BRD4 until new Thr-186 phosphorylation occurs after the synthesis of a short RNA. Interacts with BRD4; to target chromatin binding. Interacts with JMJD6. Interacts with activated nuclear STAT3 and RELA/p65. Binds to AR and MYOD1. Forms a complex composed of CDK9, CCNT1/cyclin-T1, EP300 and GATA4 that stimulates hypertrophy in cardiomyocytes. The large PER complex involved in the repression of transcriptional termination is composed of at least PER2, CDK9, DDX5, DHX9, NCBP1 and POLR2A (active). Interacts with HSF1. Interacts with TBX21. Interacts with WDR43. Interacts with ZMYND8; the association appears to occur between homodimeric ZMYND8 and the activated form of the P-TEFb complex. Post-translationally, autophosphorylation at Thr-186, Ser-347, Thr-350, Ser-353, Thr-354 and Ser-357 triggers kinase activity by promoting cyclin and substrate binding upon conformational changes. Thr-186 phosphorylation requires the calcium Ca(2+) signaling pathway, including CaMK1D and calmodulin. This inhibition is relieved by Thr-29 dephosphorylation. Phosphorylation at Ser-175 inhibits kinase activity. Can be phosphorylated on either Thr-362 or Thr-363 but not on both simultaneously. In terms of processing, dephosphorylation of Thr-186 by PPM1A and PPM1B blocks CDK9 activity and may lead to CDK9 proteasomal degradation. However, PPP1CA-mediated Thr-186 dephosphorylation is required to release P-TEFb from its inactive P-TEFb/7SK snRNP complex. Dephosphorylated at Ser-347 by the PNUTS-PP1 complex during RNA polymerase II transcription pause-release. Dephosphorylation of C-terminus Thr and Ser residues by protein phosphatase-1 (PP1) triggers CDK9 activity. N6-acetylation of Lys-44 promotes kinase activity, whereas acetylation of both Lys-44 and Lys-48 mediated by PCAF/KAT2B and GCN5/KAT2A reduces kinase activity. The acetylated form associates with PML bodies in the nuclear matrix and with the transcriptionally silent HIV-1 genome; deacetylated upon transcription stimulation. Deacetylated by SIRT7, promoting the kinase activity and subsequent 'Ser-2' phosphorylation of the C-terminal domain (CTD) of RNA polymerase II. Post-translationally, polyubiquitinated and thus activated by UBR5. This ubiquitination is promoted by TFIIS/TCEA1 and favors 'Ser-2' phosphorylation of RPB1/POLR2A CTD. As to expression, expressed at high levels in brain and kidney.

The protein localises to the nucleus. The protein resides in the cytoplasm. It is found in the PML body. It carries out the reaction L-seryl-[protein] + ATP = O-phospho-L-seryl-[protein] + ADP + H(+). The enzyme catalyses L-threonyl-[protein] + ATP = O-phospho-L-threonyl-[protein] + ADP + H(+). It catalyses the reaction [DNA-directed RNA polymerase] + ATP = phospho-[DNA-directed RNA polymerase] + ADP + H(+). With respect to regulation, activation by Thr-186 phosphorylation is calcium Ca(2+) signaling pathway-dependent; actively inactivated by dephosphorylation mediated by PPP1CA, PPM1A and PPM1B. Reversibly repressed by acetylation at Lys-44 and Lys-48. In terms of biological role, protein kinase involved in the regulation of transcription. Member of the cyclin-dependent kinase pair (CDK9/cyclin-T) complex, also called positive transcription elongation factor b (P-TEFb), which facilitates the transition from abortive to productive elongation by phosphorylating the CTD (C-terminal domain) of the large subunit of RNA polymerase II (RNAP II) POLR2A, SUPT5H and RDBP. This complex is inactive when in the 7SK snRNP complex form. Phosphorylates EP300, MYOD1, RPB1/POLR2A and AR and the negative elongation factors DSIF and NELFE. Regulates cytokine inducible transcription networks by facilitating promoter recognition of target transcription factors (e.g. TNF-inducible RELA/p65 activation and IL-6-inducible STAT3 signaling). Promotes RNA synthesis in genetic programs for cell growth, differentiation and viral pathogenesis. P-TEFb is also involved in cotranscriptional histone modification, mRNA processing and mRNA export. Modulates a complex network of chromatin modifications including histone H2B monoubiquitination (H2Bub1), H3 lysine 4 trimethylation (H3K4me3) and H3K36me3; integrates phosphorylation during transcription with chromatin modifications to control co-transcriptional histone mRNA processing. The CDK9/cyclin-K complex has also a kinase activity towards CTD of RNAP II and can substitute for CDK9/cyclin-T P-TEFb in vitro. Replication stress response protein; the CDK9/cyclin-K complex is required for genome integrity maintenance, by promoting cell cycle recovery from replication arrest and limiting single-stranded DNA amount in response to replication stress, thus reducing the breakdown of stalled replication forks and avoiding DNA damage. In addition, probable function in DNA repair of isoform 2 via interaction with KU70/XRCC6. Promotes cardiac myocyte enlargement. RPB1/POLR2A phosphorylation on 'Ser-2' in CTD activates transcription. AR phosphorylation modulates AR transcription factor promoter selectivity and cell growth. DSIF and NELF phosphorylation promotes transcription by inhibiting their negative effect. The phosphorylation of MYOD1 enhances its transcriptional activity and thus promotes muscle differentiation. Catalyzes phosphorylation of KAT5, promoting KAT5 recruitment to chromatin and histone acetyltransferase activity. This Mus musculus (Mouse) protein is Cyclin-dependent kinase 9 (Cdk9).